Reading from the N-terminus, the 273-residue chain is NAD-dependent protein deacylase (273 aa).

The Deacetylase sirtuin-type domain occupies 20-272 (RERLRQRIFF…PEFVDKFLKG (253 aa)). 48 to 67 (GAGISAESGIRTFRAADGLW) contacts NAD(+). Substrate is bound by residues Y92 and R95. 129–132 (QNID) contributes to the NAD(+) binding site. H147 acts as the Proton acceptor in catalysis. Residues C155 and C174 each coordinate Zn(2+). Residues 214 to 216 (GTS), 240 to 242 (NLE), and A258 contribute to the NAD(+) site.

This sequence belongs to the sirtuin family. Class III subfamily. Requires Zn(2+) as cofactor.

The protein localises to the cytoplasm. It carries out the reaction N(6)-acetyl-L-lysyl-[protein] + NAD(+) + H2O = 2''-O-acetyl-ADP-D-ribose + nicotinamide + L-lysyl-[protein]. The catalysed reaction is N(6)-succinyl-L-lysyl-[protein] + NAD(+) + H2O = 2''-O-succinyl-ADP-D-ribose + nicotinamide + L-lysyl-[protein]. The enzyme catalyses N(6)-(2-hydroxyisobutanoyl)-L-lysyl-[protein] + NAD(+) + H2O = 2''-O-(2-hydroxyisobutanoyl)-ADP-D-ribose + nicotinamide + L-lysyl-[protein]. Its function is as follows. NAD-dependent lysine deacetylase that specifically removes acetyl groups on target proteins. Also acts as a protein-lysine deacylase by mediating protein desuccinylation and de-2-hydroxyisobutyrylation. Modulates the activities of several proteins which are inactive in their acylated form. The sequence is that of NAD-dependent protein deacylase from Salmonella typhi.